A 90-amino-acid chain; its full sequence is Small ribosomal subunit protein uS15 (90 aa).

The protein belongs to the universal ribosomal protein uS15 family. As to quaternary structure, part of the 30S ribosomal subunit. Forms a bridge to the 50S subunit in the 70S ribosome, contacting the 23S rRNA.

Functionally, one of the primary rRNA binding proteins, it binds directly to 16S rRNA where it helps nucleate assembly of the platform of the 30S subunit by binding and bridging several RNA helices of the 16S rRNA. Forms an intersubunit bridge (bridge B4) with the 23S rRNA of the 50S subunit in the ribosome. This chain is Small ribosomal subunit protein uS15, found in Campylobacter curvus (strain 525.92).